The primary structure comprises 449 residues: Probable rhamnogalacturonase E (449 aa).

An N-terminal signal peptide occupies residues 1-21 (MRSKTFSVLSSCLLLIATVQG). Cys42 and Cys68 are disulfide-bonded. Residues Asn53, Asn91, and Asn106 are each glycosylated (N-linked (GlcNAc...) asparagine). The active-site Proton donor is the Asp221. A disulfide bridge connects residues Cys223 and Cys240. N-linked (GlcNAc...) asparagine glycosylation is found at Asn241 and Asn256. The active site involves His296. An N-linked (GlcNAc...) asparagine glycan is attached at Asn323. 2 disulfides stabilise this stretch: Cys346–Cys352 and Cys374–Cys383.

It belongs to the glycosyl hydrolase 28 family.

It is found in the secreted. The enzyme catalyses Endohydrolysis of alpha-D-GalA-(1-&gt;2)-alpha-L-Rha glycosidic bond in the rhamnogalacturonan I backbone with initial inversion of anomeric configuration releasing oligosaccharides with beta-D-GalA at the reducing end.. In terms of biological role, pectinolytic enzymes consist of four classes of enzymes: pectine lyase, polygalacturonase, pectin methylesterase and rhamnogalacturonase. Hydrolyzes alpha-D-galacturonopyranosyl-(1,2)-alpha-L-rhamnopyranosyl linkages in the backbone of the hairy regions of pectins. This chain is Probable rhamnogalacturonase E (rhgE), found in Aspergillus flavus (strain ATCC 200026 / FGSC A1120 / IAM 13836 / NRRL 3357 / JCM 12722 / SRRC 167).